The primary structure comprises 356 residues: Malate dehydrogenase, glyoxysomal (356 aa).

The N-terminal 36 residues, 1–36 (MQPIPDVNQRIARISAHLHPPKSQMEESSALRRANC), are a transit peptide targeting the glyoxysome. NAD(+)-binding positions include 51 to 57 (GAAGGIG) and D77. Substrate is bound by residues R124 and R130. NAD(+) contacts are provided by residues N137 and 160 to 162 (ISN). The substrate site is built by N162 and R196. H220 (proton acceptor) is an active-site residue. Position 271 (M271) interacts with NAD(+).

This sequence belongs to the LDH/MDH superfamily. MDH type 1 family. In terms of assembly, homodimer.

The protein localises to the glyoxysome. It catalyses the reaction (S)-malate + NAD(+) = oxaloacetate + NADH + H(+). The polypeptide is Malate dehydrogenase, glyoxysomal (Citrullus lanatus (Watermelon)).